A 653-amino-acid polypeptide reads, in one-letter code: Large subunit GTPase 1 homolog (653 aa).

A disordered region spans residues 1–47 (MGKKRGTGLGRSLQRQRGSERRGASSWLHASEVVGESGPERRSAVEQ). The CP-type G domain occupies 155-439 (WRQLWRVIER…LCDCPGLVMP (285 aa)). Position 203-206 (203-206 (NKAD)) interacts with GTP. Positions 248–275 (ADSVADDLSDSEEESSSQEEDVTAEDSA) are enriched in acidic residues. The segment at 248 to 323 (ADSVADDLSD…TCSEDEGGDK (76 aa)) is disordered. Over residues 276-291 (ESTSTGSALQTENQCL) the composition is skewed to polar residues. Acidic residues predominate over residues 293 to 320 (SDDDSSDEYEDCEDEEEDDWQTCSEDEG). GTP contacts are provided by residues 388–395 (GYPNVGKS) and 432–435 (DCPG). Residues 621–653 (APSAGSVVGKPWKKHGNRNKKEKVRRITKHLEN) form a disordered region. Residues 631–653 (PWKKHGNRNKKEKVRRITKHLEN) show a composition bias toward basic residues.

Belongs to the TRAFAC class YlqF/YawG GTPase family. LSG1 subfamily.

It localises to the cytoplasm. It is found in the endoplasmic reticulum. Its subcellular location is the nucleus. The protein localises to the cajal body. The enzyme catalyses GTP + H2O = GDP + phosphate + H(+). Its function is as follows. GTPase required for the XPO1/CRM1-mediated nuclear export of the 60S ribosomal subunit. Probably acts by mediating the release of NMD3 from the 60S ribosomal subunit after export into the cytoplasm. In terms of biological role, functions as a GTPase. May act by mediating the release of NMD3 from the 60S ribosomal subunit after export into the cytoplasm during the 60S ribosomal subunit maturation. The polypeptide is Large subunit GTPase 1 homolog (Gallus gallus (Chicken)).